We begin with the raw amino-acid sequence, 501 residues long: MLELPGARACAGALAGALLLLLFVLVVRQLLRQRRPAGFPPGPPRLPFVGNICSLALSADLPHVYMRKQSRVYGEIFSLDLGGISTVVLNGYDVVKECLVHQSEIFADRPCLPLFMKMTKMGGLLNSRYGRGWIDHRRLAVNSFHYFGSGQKSFESKILEETWSLIDAIETYKGGPFDLKQLITNAVSNITNLILFGERFTYEDTDFQHMIELFSENVELAASAPVFLYNAFPWIGILPFGKHQRLFRNADVVYDFLSRLIEKAAVNRKPHLPHHFVDAYLDEMDQGQNDPLSTFSKENLIFSVGELIIAGTETTTNVLRWAILFMALYPNIQGQVHKEIDLIVGHNRRPSWEYKCKMPYTEAVLHEVLRFCNIVPLGIFHATSEDAVVRGYSIPKGTTVITNLYSVHFDEKYWKDPDMFYPERFLDSNGYFTKKEALIPFSLGRRHCLGEQLARMEMFLFFTSLLQQFHLHFPHELVPNLKPRLGMTLQPQPYLICAERR.

A250 is a binding site for substrate. A heme-binding site is contributed by C448.

This sequence belongs to the cytochrome P450 family. Homodimer. The cofactor is heme. Highly expressed in the liver and testis.

The protein resides in the endoplasmic reticulum membrane. It localises to the microsome membrane. It carries out the reaction calciol + reduced [NADPH--hemoprotein reductase] + O2 = calcidiol + oxidized [NADPH--hemoprotein reductase] + H2O + H(+). The catalysed reaction is vitamin D2 + reduced [NADPH--hemoprotein reductase] + O2 = 25-hydroxyvitamin D2 + oxidized [NADPH--hemoprotein reductase] + H2O + H(+). The enzyme catalyses 1alpha-hydroxyvitamin D2 + reduced [NADPH--hemoprotein reductase] + O2 = 1alpha,25-dihydroxyvitamin D2 + oxidized [NADPH--hemoprotein reductase] + H2O + H(+). It catalyses the reaction alfacalcidol + reduced [NADPH--hemoprotein reductase] + O2 = calcitriol + oxidized [NADPH--hemoprotein reductase] + H2O + H(+). Its pathway is hormone biosynthesis; vitamin D biosynthesis. Its function is as follows. A cytochrome P450 monooxygenase involved in activation of vitamin D precursors. Catalyzes hydroxylation at C-25 of both forms of vitamin D, vitamin D(2) and D(3) (calciol). Can metabolize vitamin D analogs/prodrugs 1alpha-hydroxyvitamin D(2) (doxercalciferol) and 1alpha-hydroxyvitamin D(3) (alfacalcidol) forming 25-hydroxy derivatives. Mechanistically, uses molecular oxygen inserting one oxygen atom into a substrate, and reducing the second into a water molecule, with two electrons provided by NADPH via cytochrome P450 reductase (CPR; NADPH-ferrihemoprotein reductase). The protein is Vitamin D 25-hydroxylase (Cyp2r1) of Mus musculus (Mouse).